Reading from the N-terminus, the 968-residue chain is Isoleucine--tRNA ligase (968 aa).

The 'HIGH' region signature appears at 68 to 78 (PYANGALHMGH). Glu-582 provides a ligand contact to L-isoleucyl-5'-AMP. Positions 623–627 (KMSKS) match the 'KMSKS' region motif. An ATP-binding site is contributed by Lys-626. Zn(2+) is bound by residues Cys-936, Cys-939, Cys-956, and Cys-959.

The protein belongs to the class-I aminoacyl-tRNA synthetase family. IleS type 1 subfamily. In terms of assembly, monomer. The cofactor is Zn(2+).

The protein localises to the cytoplasm. It catalyses the reaction tRNA(Ile) + L-isoleucine + ATP = L-isoleucyl-tRNA(Ile) + AMP + diphosphate. Functionally, catalyzes the attachment of isoleucine to tRNA(Ile). As IleRS can inadvertently accommodate and process structurally similar amino acids such as valine, to avoid such errors it has two additional distinct tRNA(Ile)-dependent editing activities. One activity is designated as 'pretransfer' editing and involves the hydrolysis of activated Val-AMP. The other activity is designated 'posttransfer' editing and involves deacylation of mischarged Val-tRNA(Ile). The sequence is that of Isoleucine--tRNA ligase from Prochlorococcus marinus (strain AS9601).